Here is a 263-residue protein sequence, read N- to C-terminus: UPF0328 protein ECU08_2060 (263 aa).

It belongs to the UPF0328 family.

In Encephalitozoon cuniculi (strain GB-M1) (Microsporidian parasite), this protein is UPF0328 protein ECU08_2060.